A 342-amino-acid polypeptide reads, in one-letter code: tRNA N6-adenosine threonylcarbamoyltransferase (342 aa).

Residues His111 and His115 each contribute to the Fe cation site. Substrate contacts are provided by residues 133-137, Asp166, Gly179, Asp183, and Asn273; that span reads VVSGG. Asp301 serves as a coordination point for Fe cation.

This sequence belongs to the KAE1 / TsaD family. Fe(2+) serves as cofactor.

It localises to the cytoplasm. It catalyses the reaction L-threonylcarbamoyladenylate + adenosine(37) in tRNA = N(6)-L-threonylcarbamoyladenosine(37) in tRNA + AMP + H(+). In terms of biological role, required for the formation of a threonylcarbamoyl group on adenosine at position 37 (t(6)A37) in tRNAs that read codons beginning with adenine. Is involved in the transfer of the threonylcarbamoyl moiety of threonylcarbamoyl-AMP (TC-AMP) to the N6 group of A37, together with TsaE and TsaB. TsaD likely plays a direct catalytic role in this reaction. This chain is tRNA N6-adenosine threonylcarbamoyltransferase, found in Trichlorobacter lovleyi (strain ATCC BAA-1151 / DSM 17278 / SZ) (Geobacter lovleyi).